Here is an 899-residue protein sequence, read N- to C-terminus: Translation initiation factor IF-2 (899 aa).

Disordered stretches follow at residues 65 to 84 (KTRSTLNVPSTGGKSKSVQI) and 91 to 310 (TYVK…SFNK). Residues 68 to 82 (STLNVPSTGGKSKSV) show a composition bias toward polar residues. A compositionally biased stretch (basic and acidic residues) spans 108 to 164 (QARREAEEQAQRAAEEQAKREAELREAAEKAKRAADEQAKREAAEKAKRDVAEKEKV). The segment covering 165 to 174 (TNQQNENMTK) has biased composition (polar residues). Over residues 177–236 (QAEKAKREAEAAELKRKAEEAARLKVEEEARRIAEEARRMAEENAGRWEAESAKPEESAD) the composition is skewed to basic and acidic residues. The span at 262–276 (SRSRAGKVTKQKKGN) shows a compositional bias: basic residues. Residues 277 to 290 (RQSESKADREEARA) show a composition bias toward basic and acidic residues. Residues 398–567 (ARAPVVTIMG…LLQAEVLELK (170 aa)) enclose the tr-type G domain. The G1 stretch occupies residues 407 to 414 (GHVDHGKT). 407–414 (GHVDHGKT) is a binding site for GTP. Residues 432-436 (GITQH) form a G2 region. A G3 region spans residues 453–456 (DTPG). GTP-binding positions include 453-457 (DTPGH) and 507-510 (NKID). Residues 507–510 (NKID) are G4. The segment at 543–545 (SAK) is G5.

Belongs to the TRAFAC class translation factor GTPase superfamily. Classic translation factor GTPase family. IF-2 subfamily.

It is found in the cytoplasm. Its function is as follows. One of the essential components for the initiation of protein synthesis. Protects formylmethionyl-tRNA from spontaneous hydrolysis and promotes its binding to the 30S ribosomal subunits. Also involved in the hydrolysis of GTP during the formation of the 70S ribosomal complex. This Pectobacterium carotovorum subsp. carotovorum (strain PC1) protein is Translation initiation factor IF-2.